Consider the following 383-residue polypeptide: Mannitol-1-phosphate 5-dehydrogenase (383 aa).

Residue 3 to 14 (ALHFGAGNIGRG) participates in NAD(+) binding.

Belongs to the mannitol dehydrogenase family.

It carries out the reaction D-mannitol 1-phosphate + NAD(+) = beta-D-fructose 6-phosphate + NADH + H(+). The polypeptide is Mannitol-1-phosphate 5-dehydrogenase (Serratia proteamaculans (strain 568)).